A 597-amino-acid polypeptide reads, in one-letter code: DDB1- and CUL4-associated factor 8 (597 aa).

Residues 1-24 show a composition bias toward polar residues; the sequence is MSSKGSSTDGRTDLANGSLSSSPE. The tract at residues 1–147 is disordered; the sequence is MSSKGSSTDG…DWVSSETSAL (147 aa). A phosphoserine mark is found at S21 and S22. The Nuclear export signal motif lies at 39-50; the sequence is IEVEASDLSLSL. Residues 65–99 are compositionally biased toward basic and acidic residues; sequence RGTDTESSGEDKDSDSMEDTGHYSINDENRVHDRS. At S99 the chain carries Phosphoserine. Residues 100–112 show a composition bias toward acidic residues; that stretch reads EEEEEEEEEEEEE. The Nuclear localization signal motif lies at 114 to 122; sequence PRRRVQRKR. Positions 124-137 are enriched in basic and acidic residues; sequence NRDQDSSDDERALE. Residues S129 and S130 each carry the phosphoserine modification. WD repeat units lie at residues 191–230, 234–275, 281–321, 329–369, 385–424, 432–472, and 476–515; these read GHTG…PVLD, GHKS…CCKN, QHKG…PASK, EKKV…ENEN, ESKA…GAQY, RNNA…IIQF, and DKGG…STEL. The residue at position 204 (R204) is an Omega-N-methylarginine; by PRMT1. A disordered region spans residues 558–597; sequence HRRWREPGVGATDADSDESPSSSDTSDEEEGPDRVQCMPS.

It belongs to the WD repeat DCAF8 family. Interacts with DDB1, CUL4A and CUL4B. Interacts with KPNA1, KPNB1 and XPO1.

It localises to the nucleus. It is found in the cytoplasm. Its pathway is protein modification; protein ubiquitination. In terms of biological role, may function as a substrate receptor for CUL4-DDB1 E3 ubiquitin-protein ligase complex. This is DDB1- and CUL4-associated factor 8 (DCAF8) from Homo sapiens (Human).